The following is an 879-amino-acid chain: Phosphoenolpyruvate carboxylase (879 aa).

Residues His138 and Lys546 contribute to the active site.

It belongs to the PEPCase type 1 family. The cofactor is Mg(2+).

It carries out the reaction oxaloacetate + phosphate = phosphoenolpyruvate + hydrogencarbonate. In terms of biological role, forms oxaloacetate, a four-carbon dicarboxylic acid source for the tricarboxylic acid cycle. In Pectobacterium atrosepticum (strain SCRI 1043 / ATCC BAA-672) (Erwinia carotovora subsp. atroseptica), this protein is Phosphoenolpyruvate carboxylase.